A 195-amino-acid chain; its full sequence is Insertion element IS136 uncharacterized protein Atu4601 (195 aa).

Residues 25-194 enclose the Integrase catalytic domain; sequence MVMRSNLRWC…SPRQFIRAKS (170 aa).

The sequence is that of Insertion element IS136 uncharacterized protein Atu4601 from Agrobacterium fabrum (strain C58 / ATCC 33970) (Agrobacterium tumefaciens (strain C58)).